A 681-amino-acid chain; its full sequence is Envelope glycoprotein (681 aa).

A signal peptide spans 1-18; sequence MKTTCLLISLILIQGVKT. Topologically, residues 19–648 are extracellular; that stretch reads LPILEIASNI…GLGGKWWTSD (630 aa). The segment at 38 to 188 is receptor-binding; that stretch reads SGTLQKTEDV…FSRQGQGYRH (151 aa). Asparagine 94, asparagine 171, asparagine 190, asparagine 202, asparagine 207, asparagine 219, asparagine 223, and asparagine 255 each carry an N-linked (GlcNAc...) asparagine; by host glycan. The tract at residues 222 to 424 is disordered; sequence KNQTCAPSKK…TSPSPTPNST (203 aa). Polar residues-rich tracts occupy residues 244 to 259, 278 to 290, and 308 to 331; these read LTST…TTDP, PYTT…KQGL, and GGNN…TAQP. The interval 277–455 is mucin-like region; that stretch reads EPYTTSDAAT…PFLDGLINAP (179 aa). Asparagine 310, asparagine 313, asparagine 326, asparagine 337, asparagine 344, asparagine 345, asparagine 350, asparagine 360, asparagine 397, asparagine 408, asparagine 422, and asparagine 487 each carry an N-linked (GlcNAc...) asparagine; by host glycan. Over residues 337-347 the composition is skewed to low complexity; sequence NTTTISTNNTS. The segment covering 348–388 has biased composition (polar residues); the sequence is KHNLSTPSVPIQNATNYNTQSTAPENEQTSAPSKTTLLPTE. The span at 389 to 424 shows a compositional bias: low complexity; it reads NPTTAKSTNSTKSPTTTVPNTTNKYSTSPSPTPNST. Residues 529 to 549 form a fusion peptide region; sequence GLSWIPFFGPGIEGLYTAGLI. Residues asparagine 564 and asparagine 619 are each glycosylated (N-linked (GlcNAc...) asparagine; by host). The helical transmembrane segment at 649–669 threads the bilayer; sequence WGVLTNLGILLLLSIAVLIAL. Topologically, residues 670–681 are cytoplasmic; that stretch reads SCICRIFTKYIG. 2 S-palmitoyl cysteine; by host lipidation sites follow: cysteine 671 and cysteine 673.

The protein belongs to the filoviruses glycoprotein family. In terms of assembly, homotrimer; each monomer consists of a GP1 and a GP2 subunit linked by disulfide bonds. The resulting peplomers (GP1,2) protrude from the virus surface as spikes. GP1,2 interacts with human CD209 and CLEC4M (collectively referred to as DC-SIGN(R)). Asialoglycoprotein receptor (ASGP-R) may be a liver-specific receptor for GP1,2. Members of the Tyro3 receptor tyrosine kinase family may be cell entry factors interacting with GP1,2. Post-translationally, N-glycosylated. In terms of processing, O-glycosylated in the mucin-like region. Specific enzymatic cleavages in vivo yield mature proteins. The precursor is processed into GP1 and GP2 by host cell furin in the trans Golgi, and maybe by other host proteases, to yield the mature GP1 and GP2 proteins. The cleavage site corresponds to the furin optimal cleavage sequence [KR]-X-[KR]-R. Post-translationally, GP1 is phosphorylated on serine residues between residues 260 and 273.

The protein localises to the virion membrane. It localises to the host cell membrane. Functionally, GP1 is responsible for binding to the receptor(s) on target cells. Interacts with CD209/DC-SIGN and CLEC4M/DC-SIGNR which act as cofactors for virus entry into the host cell. Binding to CD209 and CLEC4M, which are respectively found on dendritic cells (DCs), and on endothelial cells of liver sinusoids and lymph node sinuses, facilitate infection of macrophages and endothelial cells. These interactions not only facilitate virus cell entry, but also allow capture of viral particles by DCs and subsequent transmission to susceptible cells without DCs infection (trans infection). Its function is as follows. GP2 acts as a class I viral fusion protein. Under the current model, the protein has at least 3 conformational states: pre-fusion native state, pre-hairpin intermediate state, and post-fusion hairpin state. During viral and target cell membrane fusion, the coiled coil regions (heptad repeats) assume a trimer-of-hairpins structure, positioning the fusion peptide in close proximity to the C-terminal region of the ectodomain. The formation of this structure appears to drive apposition and subsequent fusion of viral and target cell membranes. Responsible for penetration of the virus into the cell cytoplasm by mediating the fusion of the membrane of the endocytosed virus particle with the endosomal membrane. Low pH in endosomes induces an irreversible conformational change in GP2, releasing the fusion hydrophobic peptide. The sequence is that of Envelope glycoprotein (GP) from Chlorocebus aethiops (Green monkey).